We begin with the raw amino-acid sequence, 205 residues long: High frequency lysogenization protein HflD homolog (205 aa).

The protein belongs to the HflD family.

The protein resides in the cytoplasm. Its subcellular location is the cell inner membrane. The polypeptide is High frequency lysogenization protein HflD homolog (Haemophilus influenzae (strain PittEE)).